We begin with the raw amino-acid sequence, 497 residues long: Cobyric acid synthase (497 aa).

A GATase cobBQ-type domain is found at glutamate 250–tryptophan 445. Cysteine 331 functions as the Nucleophile in the catalytic mechanism. Histidine 437 is an active-site residue.

This sequence belongs to the CobB/CobQ family. CobQ subfamily.

It participates in cofactor biosynthesis; adenosylcobalamin biosynthesis. In terms of biological role, catalyzes amidations at positions B, D, E, and G on adenosylcobyrinic A,C-diamide. NH(2) groups are provided by glutamine, and one molecule of ATP is hydrogenolyzed for each amidation. This is Cobyric acid synthase from Acaryochloris marina (strain MBIC 11017).